A 178-amino-acid polypeptide reads, in one-letter code: Sec-independent protein translocase protein TatB (178 aa).

The chain crosses the membrane as a helical span at residues 1–21 (MFDIGWSELVVIAVVALIAIG). Polar residues predominate over residues 77-86 (TSGNLMTKLT). Residues 77–178 (TSGNLMTKLT…HEAVKDAKAS (102 aa)) form a disordered region. Basic and acidic residues predominate over residues 93–102 (PKLEDLDKPA). A compositionally biased stretch (low complexity) spans 155–165 (HATPEPAPATH). Positions 166 to 178 (ETPHEAVKDAKAS) are enriched in basic and acidic residues.

Belongs to the TatB family. The Tat system comprises two distinct complexes: a TatABC complex, containing multiple copies of TatA, TatB and TatC subunits, and a separate TatA complex, containing only TatA subunits. Substrates initially bind to the TatABC complex, which probably triggers association of the separate TatA complex to form the active translocon.

Its subcellular location is the cell inner membrane. Part of the twin-arginine translocation (Tat) system that transports large folded proteins containing a characteristic twin-arginine motif in their signal peptide across membranes. Together with TatC, TatB is part of a receptor directly interacting with Tat signal peptides. TatB may form an oligomeric binding site that transiently accommodates folded Tat precursor proteins before their translocation. The sequence is that of Sec-independent protein translocase protein TatB from Nitrobacter hamburgensis (strain DSM 10229 / NCIMB 13809 / X14).